The following is a 205-amino-acid chain: N-(5'-phosphoribosyl)anthranilate isomerase (205 aa).

Belongs to the TrpF family.

It carries out the reaction N-(5-phospho-beta-D-ribosyl)anthranilate = 1-(2-carboxyphenylamino)-1-deoxy-D-ribulose 5-phosphate. It participates in amino-acid biosynthesis; L-tryptophan biosynthesis; L-tryptophan from chorismate: step 3/5. This chain is N-(5'-phosphoribosyl)anthranilate isomerase, found in Trichlorobacter lovleyi (strain ATCC BAA-1151 / DSM 17278 / SZ) (Geobacter lovleyi).